Consider the following 482-residue polypeptide: Magnesium-dependent glutamate N-prenyltransferase (482 aa).

Positions 351, 355, 359, and 366 each coordinate Mg(2+).

The protein belongs to the terpene synthase family. It depends on Mg(2+) as a cofactor.

The enzyme catalyses (2E)-geranyl diphosphate + L-glutamate = N-geranyl-L-glutamate + diphosphate. It participates in secondary metabolite biosynthesis. In terms of biological role, magnesium-dependent glutamate N-prenyltransferase: part of the gene cluster that mediates the biosynthesis of domoic acid (DA) and derivatives, natural products with neurochemical activity acting as ionotropic glutamate receptor (iGluR) agonists, thus being neurotoxins causing amnesic shellfish poisoning (ASP). Catalyzes the conversion of L-glutamic acid (L-Glu) to N-geranyl-L-glutamic acid (NGG) in the presence of geranyl diphosphate (GPP). Also able to catalyze the formation of farnesyl-L-glutamate from farnesyl diphosphate (FPP). Cannot use dimethylallyl diphosphate (DMAPP) as substrate. This is Magnesium-dependent glutamate N-prenyltransferase from Pseudo-nitzschia multiseries (Marine planktonic diatom).